A 73-amino-acid polypeptide reads, in one-letter code: Homeodomain-only protein (73 aa).

The homeobox; degenerate DNA-binding region spans 3–62 (TEKSVTPTEEQLEILEYNFCKVNKHPDPTTLCLIAAETGLSEEQTLKWFKQRLAEWRKSE).

It is found in the nucleus. Its subcellular location is the cytoplasm. Atypical homeodomain protein which does not bind DNA and is required to modulate cardiac growth and development. May act via an interaction with SRF, leading to modulate the expression of SRF-dependent cardiac-specific genes and cardiac development. May act as a co-chaperone for HSPA1A and HSPA1B chaperone proteins and assist in chaperone-mediated protein refolding. In Gallus gallus (Chicken), this protein is Homeodomain-only protein (HOPX).